We begin with the raw amino-acid sequence, 933 residues long: Progesterone receptor (933 aa).

An AF3; mediates transcriptional activation region spans residues 1–164; that stretch reads MTELKAKGPR…PATQGVLSPL (164 aa). The disordered stretch occupies residues 1 to 256; the sequence is MTELKAKGPR…AAAGGGAAAV (256 aa). Residues 1 to 566 form a modulating, Pro-Rich region; the sequence is MTELKAKGPR…YSFESLPQKI (566 aa). Position 20 is a phosphoserine (Ser20). Residues 55–59 carry the LXXL motif 1 motif; that stretch reads LDGLL. Residue Ser81 is modified to Phosphoserine. The LXXL motif 2 motif lies at 115–119; it reads LDTLL. Residues Ser130 and Ser162 each carry the phosphoserine modification. Positions 165 to 305 are mediates transcriptional transrepression; that stretch reads MSRSGCKAGD…LATTMMDFIH (141 aa). The Nuclear localization signal signature appears at 183–187; it reads KVLPR. Phosphoserine is present on residues Ser190 and Ser213. Positions 220 to 231 are enriched in acidic residues; that stretch reads EVEEEDGSESEE. A compositionally biased stretch (low complexity) spans 232–246; the sequence is SAGPLLKGKPRALGG. Ser294 bears the Phosphoserine; by MAPK1 mark. The segment at 331-378 is disordered; the sequence is GGAGAASAFAPPRSSPSASSTPVAVGDFPDCAYPPDAEPKDDAYPLYS. Over residues 335–350 the composition is skewed to low complexity; that stretch reads AASAFAPPRSSPSASS. At Ser345 the chain carries Phosphoserine; by MAPK. Residue Lys388 forms a Glycyl lysine isopeptide (Lys-Gly) (interchain with G-Cter in SUMO); alternate linkage. Lys388 participates in a covalent cross-link: Glycyl lysine isopeptide (Lys-Gly) (interchain with G-Cter in ubiquitin); alternate. Ser400 carries the phosphoserine; by CDK2 modification. Positions 415 to 452 are disordered; the sequence is PDFPLGPPPPLPPRAPPSRPGEAAVTAAPASASVSSAS. Over residues 418-433 the composition is skewed to pro residues; sequence PLGPPPPLPPRAPPSR. Residues 434 to 452 show a composition bias toward low complexity; it reads PGEAAVTAAPASASVSSAS. The tract at residues 456–546 is AF1; mediates transcriptional activation; the sequence is STLECILYKA…VYPPYLNYLR (91 aa). Residue Lys531 forms a Glycyl lysine isopeptide (Lys-Gly) (interchain with G-Cter in SUMO) linkage. NR C4-type zinc fingers lie at residues 567-587 and 603-627; these read CLIC…CGSC and CAGR…LRKC. A DNA-binding region (nuclear receptor) is located at residues 567 to 639; sequence CLICGDEASG…AGMVLGGRKF (73 aa). Ser676 is subject to Phosphoserine. Residues 679 to 913 form the NR LBD domain; the sequence is QDIQLIPPLI…EFPEMMSEVI (235 aa). An AF2; mediates transcriptional activation region spans residues 687–933; the sequence is LINLLMSIEP…MVKPLLFHKK (247 aa). Residue Arg766 coordinates progesterone.

This sequence belongs to the nuclear hormone receptor family. In terms of assembly, interacts with SMARD1 and UNC45A. Interacts with CUEDC2; the interaction promotes ubiquitination, decreases sumoylation, and represses transcriptional activity. Interacts with PIAS3; the interaction promotes sumoylation of PR in a hormone-dependent manner, inhibits DNA-binding, and alters nuclear export. Interacts with SP1; the interaction requires ligand-induced phosphorylation on Ser-345 by ERK1/2-MAPK. Interacts with PRMT2. Interacts with NCOA2 and NCOA1. Interacts with KLF9. Interacts with GTF2B. Post-translationally, phosphorylated on multiple serine sites. Several of these sites are hormone-dependent. Phosphorylation on Ser-294 is highly hormone-dependent and modulates ubiquitination and sumoylation on Lys-388. Phosphorylation on Ser-102 and Ser-345 also requires induction by hormone. Basal phosphorylation on Ser-81, Ser-162, Ser-190 and Ser-400 is increased in response to progesterone and can be phosphorylated in vitro by the CDK2-A1 complex. Increased levels of phosphorylation on Ser-400 also in the presence of EGF, heregulin, IGF, PMA and FBS. Phosphorylation at this site by CDK2 is ligand-independent, and increases nuclear translocation and transcriptional activity. Phosphorylation at Ser-162 and Ser-294, but not at Ser-190, is impaired during the G(2)/M phase of the cell cycle. Phosphorylation on Ser-345 by ERK1/2 MAPK is required for interaction with SP1. Sumoylation is hormone-dependent and represses transcriptional activity. Sumoylation on all three sites is enhanced by PIAS3. Desumoylated by SENP1. Sumoylation on Lys-388, the main site of sumoylation, is repressed by ubiquitination on the same site, and modulated by phosphorylation at Ser-294. In terms of processing, ubiquitination is hormone-dependent and represses sumoylation on the same site. Promoted by MAPK-mediated phosphorylation on Ser-294. Ubiquitinated by UBR5, leading to its degradation: UBR5 specifically recognizes and binds ligand-bound PGR when it is not associated with coactivators (NCOAs). In presence of NCOAs, the UBR5-degron is not accessible, preventing its ubiquitination and degradation. Post-translationally, palmitoylated by ZDHHC7 and ZDHHC21. Palmitoylation is required for plasma membrane targeting and for rapid intracellular signaling via ERK and AKT kinases and cAMP generation.

It localises to the nucleus. Its subcellular location is the cytoplasm. The steroid hormones and their receptors are involved in the regulation of eukaryotic gene expression and affect cellular proliferation and differentiation in target tissues. Transcriptional activator of several progesteron-dependent promoters in a variety of cell types. Involved in activation of SRC-dependent MAPK signaling on hormone stimulation. The sequence is that of Progesterone receptor (PGR) from Pan paniscus (Pygmy chimpanzee).